Here is a 421-residue protein sequence, read N- to C-terminus: ATP-dependent RNA helicase RhlB (421 aa).

A Q motif motif is present at residues 9-37 (QKFSDFALHPKVVEALEKKGFHNCTPIQA). The 180-residue stretch at 40-219 (LPLTLAGRDV…FEQMNNAEYI (180 aa)) folds into the Helicase ATP-binding domain. 53-60 (AQTGTGKT) is an ATP binding site. Residues 165–168 (DEAD) carry the DEAD box motif. Residues 245-390 (RLLQTLIEEE…VSKYNPDALM (146 aa)) enclose the Helicase C-terminal domain. The interval 392-421 (DLPKPLRLTRPRTGNGPRRTGAPRNRRRSG) is disordered. Over residues 402 to 414 (PRTGNGPRRTGAP) the composition is skewed to low complexity.

Belongs to the DEAD box helicase family. RhlB subfamily. In terms of assembly, component of the RNA degradosome, which is a multiprotein complex involved in RNA processing and mRNA degradation.

The protein localises to the cytoplasm. It catalyses the reaction ATP + H2O = ADP + phosphate + H(+). Its function is as follows. DEAD-box RNA helicase involved in RNA degradation. Has RNA-dependent ATPase activity and unwinds double-stranded RNA. This chain is ATP-dependent RNA helicase RhlB, found in Escherichia coli O157:H7 (strain EC4115 / EHEC).